The primary structure comprises 1707 residues: MLPTILSISYEHTYAYLSKYQTAYACEGKKLTIECEPGDVINLIRANYGRFSITICNDHGNVEWSVNCMFPKSLSVLNSRCAHKQSCGVLAATSMFGDPCPGTHKYLEAHYQCISAAQTSTTTNRPSPPPWVLSNGPPIFGNGSGLIHPPGVGAGAPPPPRLPTLPGVVGISGNPGLFNVPPQHTAVTHSTPSSSTTAVGGGRLKGVPTSTTTTKHPAGRHDGLPPPPQLHHHHNHHGDDTATPTKPSSKLPAGGNATSPSNTRILTGVGGSGTDDGTLLTTKSSPNRPPGTAASGAVVPGNGSVVRTINNINLNAAGISGGDDESKLFCGPTHARNLYWNMTRVGDVNVQPCPGGAAGIAKWRCVLMKRMPDSGYDEYDDDPSSTTPAPNGGDCLHNSSSCEPPVSMAHKVNQRLRNFEPTWHPATPDLTQCRSLWLNNLEMRVNQRDSSLISIANDMSEVTSSKTLYGGDMLVTTKIIQTVSEKMLHDKETFPDQRQREAMIMELLHCVVKTGSNLLDESQLSSWLDLNPEDQMRVATSLLTGLEYNAFLLADTIIRERSVVQKVKNILLSVRVLETKTIQSSVVFPDSDQWPLSSDRIELPRAALIDNSEGGLVRIVFAAFDRLESILKPSYDHFDLKSSRSYVRNTAILSNDSDVNAGEIQQRLRILNSKVISASLGKGRHIQLSQPITLTLKHLKTENVTNPTCVFWNYIDHAWSANGCSLESTNRTHSVCSCNHLTNFAILMDVVDEHQHSLFTMFDGNMRIFIYISIGICVVFIVIALLTLKLFNGVFVKSARTSIYTSIYLCLLAIELLFLLGIEQTETSIFCGFITIFLHCAILSGTAWFCYEAFHSYSTLTSDELLLEVDQTPKVNCYYLLSYGLSLSVVAISLVIDPSTYTQNDYCVLMEANALFYATFVIPVLVFFVAAIGYTFLSWIILCRKSRTGLKTKEHTRLASVRFDIRCSFVFLLLLSAVWCSSYFYLRGAKMDDDTADVYGYCFICFNTLLGLYIFVFHCIQNEKIRREYRKYVRQHAWLPKCLRCSKTSISSGIVTGNGPTAGTLCSVSTSKKPKLPLGVSEEAHDDPQQQQHTPVPITEDAIMGASSDCELNEAQQRRTLKSGLMTGTLQAPPQTLGGHVVLERGSTLRSTGHASPTSSAGSTHLIFAHKQQQQQQQQQQGPLGEGYYHQPDYYSWKQPPTGTGGLKTPREYYNNTGASASSPQQAHEVFYWTQKPNSGQHGKKKRGAGGVPASPSGSLHSRTAAASQVLFYPSYKKTKAGQPTGYPQYAEALDPPLATGNAAAYYQQQQQLRRQQLHQQQQQQLSSDEEQVEQHAHLLHLQRRAGSQQQLPAPPPHMAQYQHEFMQRQYRNKHSNCDLGMGDAYYNQGSVGGADGGPVYEEILSNRNSDVQHYEVGDFDVDEVYNNSVGTGVFNNMRAAVAAGGSRYGGGSLSGGSVSSRSQQQQLKKQQQQQSLAQQRSARRCTADDDDDEEEEEDEEATAAEQLHDSVCDEDEEEDESDLEDDAHGLPPQSDERMRRLMAMQDEDFKRRFQRQLRKHGAPLDYGALPPGSGPQPEHNGAVFGVSGGVGEGSMRGAFRQQQALNAKSPGGRLAVNDLFGHGNSGPPLPPANQTPAQKRQQLQKLSPQSTTSSSSHTSHSNPNPHPLQLTHPHPHQHPPHHQQRHLSAMLDENNTVRCYLEPLAK.

Topologically, residues 1-767 (MLPTILSISY…LFTMFDGNMR (767 aa)) are extracellular. The SUEL-type lectin domain occupies 25–114 (ACEGKKLTIE…KYLEAHYQCI (90 aa)). The N-linked (GlcNAc...) asparagine glycan is linked to asparagine 142. A disordered region spans residues 176 to 301 (GLFNVPPQHT…TAASGAVVPG (126 aa)). Composition is skewed to polar residues over residues 185–198 (TAVT…STTA) and 256–265 (NATSPSNTRI). Residue asparagine 256 is glycosylated (N-linked (GlcNAc...) asparagine). The span at 275–285 (DDGTLLTTKSS) shows a compositional bias: low complexity. N-linked (GlcNAc...) asparagine glycans are attached at residues asparagine 302, asparagine 341, asparagine 398, asparagine 655, asparagine 703, and asparagine 730. The segment at 376-400 (YDEYDDDPSSTTPAPNGGDCLHNSS) is disordered. In terms of domain architecture, GAIN-B spans 561 to 754 (RSVVQKVKNI…AILMDVVDEH (194 aa)). Intrachain disulfides connect cysteine 709/cysteine 736 and cysteine 724/cysteine 738. The segment at 709 to 754 (CVFWNYIDHAWSANGCSLESTNRTHSVCSCNHLTNFAILMDVVDEH) is GPS. The helical transmembrane segment at 768–788 (IFIYISIGICVVFIVIALLTL) threads the bilayer. Over 789-801 (KLFNGVFVKSART) the chain is Cytoplasmic. Residues 802–822 (SIYTSIYLCLLAIELLFLLGI) form a helical membrane-spanning segment. At 823–828 (EQTETS) the chain is on the extracellular side. The chain crosses the membrane as a helical span at residues 829-849 (IFCGFITIFLHCAILSGTAWF). At 850–875 (CYEAFHSYSTLTSDELLLEVDQTPKV) the chain is on the cytoplasmic side. A helical transmembrane segment spans residues 876 to 896 (NCYYLLSYGLSLSVVAISLVI). Residues 897–920 (DPSTYTQNDYCVLMEANALFYATF) lie on the Extracellular side of the membrane. A helical membrane pass occupies residues 921–941 (VIPVLVFFVAAIGYTFLSWII). Over 942-968 (LCRKSRTGLKTKEHTRLASVRFDIRCS) the chain is Cytoplasmic. A helical membrane pass occupies residues 969 to 989 (FVFLLLLSAVWCSSYFYLRGA). Residues 990–999 (KMDDDTADVY) lie on the Extracellular side of the membrane. Residues 1000–1020 (GYCFICFNTLLGLYIFVFHCI) form a helical membrane-spanning segment. The Cytoplasmic segment spans residues 1021–1707 (QNEKIRREYR…VRCYLEPLAK (687 aa)). Serine 1156 carries the post-translational modification Phosphoserine. 2 disordered regions span residues 1169–1188 (AHKQ…GEGY) and 1236–1260 (KPNS…SGSL). Positions 1172–1181 (QQQQQQQQQQ) are enriched in low complexity. 2 positions are modified to phosphoserine: serine 1255 and serine 1262. The segment covering 1316 to 1326 (QQLHQQQQQQL) has biased composition (low complexity). 4 disordered regions span residues 1316 to 1335 (QQLH…QVEQ), 1450 to 1538 (GGGS…SDER), 1563 to 1582 (APLD…EHNG), and 1612 to 1687 (GGRL…QQRH). 2 positions are modified to phosphoserine: serine 1327 and serine 1328. Positions 1456–1481 (GGSVSSRSQQQQLKKQQQQQSLAQQR) are enriched in low complexity. 2 stretches are compositionally biased toward acidic residues: residues 1489–1503 (DDDD…EEAT) and 1513–1526 (CDED…DLED). The span at 1635–1650 (QTPAQKRQQLQKLSPQ) shows a compositional bias: polar residues. The span at 1651-1673 (STTSSSSHTSHSNPNPHPLQLTH) shows a compositional bias: low complexity. Positions 1674–1686 (PHPHQHPPHHQQR) are enriched in basic residues.

This sequence belongs to the G-protein coupled receptor 2 family. LN-TM7 subfamily. As to quaternary structure, forms a heterodimer, consisting of a large extracellular region non-covalently linked to a seven-transmembrane moiety. Proteolytically cleaved into 2 subunits, an extracellular subunit and a seven-transmembrane subunit.

The protein resides in the cell membrane. In Drosophila yakuba (Fruit fly), this protein is Latrophilin Cirl.